Reading from the N-terminus, the 164-residue chain is Thiol peroxidase (164 aa).

Residues 18 to 164 (KKVGDSAPDF…YEAVLSHLNK (147 aa)) form the Thioredoxin domain. The Cysteine sulfenic acid (-SOH) intermediate role is filled by Cys60. Cysteines 60 and 94 form a disulfide.

The protein belongs to the peroxiredoxin family. Tpx subfamily. As to quaternary structure, homodimer.

The enzyme catalyses a hydroperoxide + [thioredoxin]-dithiol = an alcohol + [thioredoxin]-disulfide + H2O. Its function is as follows. Thiol-specific peroxidase that catalyzes the reduction of hydrogen peroxide and organic hydroperoxides to water and alcohols, respectively. Plays a role in cell protection against oxidative stress by detoxifying peroxides. In Oceanobacillus iheyensis (strain DSM 14371 / CIP 107618 / JCM 11309 / KCTC 3954 / HTE831), this protein is Thiol peroxidase.